Reading from the N-terminus, the 123-residue chain is uncharacterized protein (123 aa).

The helical transmembrane segment at glycine 5–tyrosine 25 threads the bilayer. The tract at residues proline 33–histidine 54 is disordered. Residues valine 35–proline 47 show a composition bias toward pro residues.

It belongs to the asfivirus CP123L family.

It localises to the host membrane. The protein resides in the virion. This is an uncharacterized protein from African swine fever virus (isolate Warthog/Namibia/Wart80/1980) (ASFV).